Consider the following 354-residue polypeptide: Serum paraoxonase/arylesterase 2 (354 aa).

A disulfide bridge connects residues Cys-42 and Cys-352. Ca(2+)-binding residues include Glu-53 and Asp-54. His-114 (proton acceptor) is an active-site residue. Positions 116, 167, 168, and 223 each coordinate Ca(2+). An N-linked (GlcNAc...) asparagine glycan is attached at Asn-254. Asp-268 and Asn-269 together coordinate Ca(2+). Residues Asn-269 and Asn-323 are each glycosylated (N-linked (GlcNAc...) asparagine).

This sequence belongs to the paraoxonase family. Homotrimer. It depends on Ca(2+) as a cofactor. Post-translationally, glycosylated. The signal sequence is not cleaved.

Its subcellular location is the membrane. It carries out the reaction a phenyl acetate + H2O = a phenol + acetate + H(+). The enzyme catalyses an N-acyl-L-homoserine lactone + H2O = an N-acyl-L-homoserine + H(+). Its function is as follows. Capable of hydrolyzing lactones and a number of aromatic carboxylic acid esters. The chain is Serum paraoxonase/arylesterase 2 (PON2) from Bos taurus (Bovine).